The chain runs to 452 residues: Septin-10 (452 aa).

In terms of domain architecture, Septin-type G spans 36–302; the sequence is QGFCFNILCV…ELYRRCKLQE (267 aa). Positions 46 to 53 are G1 motif; sequence GETGIGKS. Residues 46 to 53, glycine 101, 182 to 190, glycine 236, and arginine 251 each bind GTP; these read GETGIGKS and KADTISKSE. Positions 98 to 101 are G3 motif; that stretch reads NTVG. Residues 181–184 are G4 motif; it reads AKAD. Serine 414 carries the post-translational modification Phosphoserine.

It belongs to the TRAFAC class TrmE-Era-EngA-EngB-Septin-like GTPase superfamily. Septin GTPase family. Septins polymerize into heterooligomeric protein complexes that form filaments, and can associate with cellular membranes, actin filaments and microtubules. GTPase activity is required for filament formation. Interacts with ADGB. Post-translationally, proteolytically cleaved in vitro in a calmodulin-dependent manner.

The protein resides in the cytoplasm. Its subcellular location is the cytoskeleton. It localises to the cell projection. The protein localises to the cilium. It is found in the flagellum. In terms of biological role, filament-forming cytoskeletal GTPase. May play a role in cytokinesis (Potential). The sequence is that of Septin-10 from Mus musculus (Mouse).